The sequence spans 509 residues: Activin receptor type-1 (509 aa).

A signal peptide spans 1–20; sequence MVDGAMILSVLMMMALPSPS. Residues 21-123 lie on the Extracellular side of the membrane; the sequence is MEDEEPKVNP…FPGSQNFHLE (103 aa). N-linked (GlcNAc...) asparagine glycosylation occurs at asparagine 102. The helical transmembrane segment at 124-146 threads the bilayer; that stretch reads VGLIILSVVFAVCLFACILGVAL. The Cytoplasmic segment spans residues 147–509; sequence RKFKRRNQER…NSLDKLKTDC (363 aa). The GS domain maps to 178 to 207; that stretch reads STLAELLDHSCTSGSGSGLPFLVQRTVARQ. The 295-residue stretch at 208 to 502 folds into the Protein kinase domain; the sequence is ITLLECVGKG…KTLTKIDNSL (295 aa). Residues 214–222 and lysine 235 each bind ATP; that span reads VGKGRYGEV. Aspartate 336 functions as the Proton acceptor in the catalytic mechanism. Serine 501 is modified (phosphoserine).

It belongs to the protein kinase superfamily. TKL Ser/Thr protein kinase family. TGFB receptor subfamily. As to quaternary structure, interacts with FKBP1A. Interacts with FCHO1. Interacts with CLU. Interacts with type II receptors AMHR2 and ACVR2A. Interacts with BMP7. Interacts with GDF2/BMP9. Interacts with BMP6 (when glycosylated); the interaction may induce HAMP expression. Interacts with TSC22D1/TSC-22. Mg(2+) serves as cofactor. Mn(2+) is required as a cofactor. As to expression, urogenital ridge, testis, ovary, brain and lungs.

The protein localises to the membrane. The catalysed reaction is L-threonyl-[receptor-protein] + ATP = O-phospho-L-threonyl-[receptor-protein] + ADP + H(+). It carries out the reaction L-seryl-[receptor-protein] + ATP = O-phospho-L-seryl-[receptor-protein] + ADP + H(+). Its function is as follows. Bone morphogenetic protein (BMP) type I receptor that is involved in a wide variety of biological processes, including bone, heart, cartilage, nervous, and reproductive system development and regulation. As a type I receptor, forms heterotetrameric receptor complexes with the type II receptors AMHR2, ACVR2A ors ACVR2B. Upon binding of ligands such as BMP7 or GDF2/BMP9 to the heteromeric complexes, type II receptors transphosphorylate ACVR1 intracellular domain. In turn, ACVR1 kinase domain is activated and subsequently phosphorylates SMAD1/5/8 proteins that transduce the signal. In addition to its role in mediating BMP pathway-specific signaling, suppresses TGFbeta/activin pathway signaling by interfering with the binding of activin to its type II receptor. Besides canonical SMAD signaling, can activate non-canonical pathways such as p38 mitogen-activated protein kinases/MAPKs. May promote the expression of HAMP, potentially via its interaction with BMP6. The protein is Activin receptor type-1 (Acvr1) of Rattus norvegicus (Rat).